Consider the following 404-residue polypeptide: S-adenosylmethionine synthase (404 aa).

The segment covering 1–13 has biased composition (polar residues); sequence MSHSRYFFTSESV. A disordered region spans residues 1–20; that stretch reads MSHSRYFFTSESVSEGHPDK. ATP is bound at residue His-17. Residue Asp-19 coordinates Mg(2+). Glu-45 provides a ligand contact to K(+). Residues Glu-58 and Gln-101 each coordinate L-methionine. Residues 101–111 are flexible loop; the sequence is QSPDINRGVDR. ATP contacts are provided by residues 172–174, 246–247, Asp-255, 261–262, Ala-278, and Lys-282; these read DSK, RF, and RK. Asp-255 lines the L-methionine pocket. Lys-286 is a binding site for L-methionine.

It belongs to the AdoMet synthase family. In terms of assembly, homotetramer; dimer of dimers. Mg(2+) serves as cofactor. K(+) is required as a cofactor.

It localises to the cytoplasm. It carries out the reaction L-methionine + ATP + H2O = S-adenosyl-L-methionine + phosphate + diphosphate. It functions in the pathway amino-acid biosynthesis; S-adenosyl-L-methionine biosynthesis; S-adenosyl-L-methionine from L-methionine: step 1/1. Its function is as follows. Catalyzes the formation of S-adenosylmethionine (AdoMet) from methionine and ATP. The overall synthetic reaction is composed of two sequential steps, AdoMet formation and the subsequent tripolyphosphate hydrolysis which occurs prior to release of AdoMet from the enzyme. This chain is S-adenosylmethionine synthase, found in Chlorobaculum parvum (strain DSM 263 / NCIMB 8327) (Chlorobium vibrioforme subsp. thiosulfatophilum).